A 110-amino-acid polypeptide reads, in one-letter code: Large ribosomal subunit protein uL22 (110 aa).

It belongs to the universal ribosomal protein uL22 family. In terms of assembly, part of the 50S ribosomal subunit.

In terms of biological role, this protein binds specifically to 23S rRNA; its binding is stimulated by other ribosomal proteins, e.g. L4, L17, and L20. It is important during the early stages of 50S assembly. It makes multiple contacts with different domains of the 23S rRNA in the assembled 50S subunit and ribosome. Functionally, the globular domain of the protein is located near the polypeptide exit tunnel on the outside of the subunit, while an extended beta-hairpin is found that lines the wall of the exit tunnel in the center of the 70S ribosome. The polypeptide is Large ribosomal subunit protein uL22 (Leptospira interrogans serogroup Icterohaemorrhagiae serovar copenhageni (strain Fiocruz L1-130)).